The primary structure comprises 400 residues: ATP-dependent RNA helicase fal-1 (400 aa).

The Q motif motif lies at 26–54; the sequence is PTFESMSLKESLLRGIYAYGYESPSAVQS. In terms of domain architecture, Helicase ATP-binding spans 57-227; it reads IVQICKGRDT…TKFMTDPVRI (171 aa). 70–77 contacts ATP; that stretch reads AQSGTGKT. The DEAD box signature appears at 175-178; that stretch reads DEAD. The region spanning 238–399 is the Helicase C-terminal domain; that stretch reads GLKQYFIAVE…EMPMNVADLI (162 aa).

It belongs to the DEAD box helicase family. DDX48/FAL1 subfamily.

Its subcellular location is the nucleus. It is found in the nucleolus. The enzyme catalyses ATP + H2O = ADP + phosphate + H(+). Functionally, ATP-dependent RNA helicase involved in 40S ribosomal subunit biogenesis. Required for the processing and cleavage of 35S pre-rRNA at sites A0, A1, and A2, leading to mature 18S rRNA. The protein is ATP-dependent RNA helicase fal-1 (fal-1) of Neurospora crassa (strain ATCC 24698 / 74-OR23-1A / CBS 708.71 / DSM 1257 / FGSC 987).